Reading from the N-terminus, the 479-residue chain is UDP-N-acetylmuramoyl-L-alanyl-D-glutamate--2,6-diaminopimelate ligase (479 aa).

S21 is a UDP-N-acetyl-alpha-D-muramoyl-L-alanyl-D-glutamate binding site. 98–104 (GTNGKSS) provides a ligand contact to ATP. Residues 144–145 (TT), S171, Q177, and R179 each bind UDP-N-acetyl-alpha-D-muramoyl-L-alanyl-D-glutamate. N6-carboxylysine is present on K211. Meso-2,6-diaminopimelate-binding positions include R372, 396-399 (DNPR), G446, and E450. A Meso-diaminopimelate recognition motif motif is present at residues 396 to 399 (DNPR).

The protein belongs to the MurCDEF family. MurE subfamily. It depends on Mg(2+) as a cofactor. Carboxylation is probably crucial for Mg(2+) binding and, consequently, for the gamma-phosphate positioning of ATP.

It is found in the cytoplasm. The catalysed reaction is UDP-N-acetyl-alpha-D-muramoyl-L-alanyl-D-glutamate + meso-2,6-diaminopimelate + ATP = UDP-N-acetyl-alpha-D-muramoyl-L-alanyl-gamma-D-glutamyl-meso-2,6-diaminopimelate + ADP + phosphate + H(+). It participates in cell wall biogenesis; peptidoglycan biosynthesis. In terms of biological role, catalyzes the addition of meso-diaminopimelic acid to the nucleotide precursor UDP-N-acetylmuramoyl-L-alanyl-D-glutamate (UMAG) in the biosynthesis of bacterial cell-wall peptidoglycan. The chain is UDP-N-acetylmuramoyl-L-alanyl-D-glutamate--2,6-diaminopimelate ligase from Rickettsia montanensis.